The following is a 203-amino-acid chain: A-type ATP synthase subunit E (203 aa).

It belongs to the V-ATPase E subunit family. Has multiple subunits with at least A(3), B(3), C, D, E, F, H, I and proteolipid K(x).

The protein resides in the cell membrane. Functionally, component of the A-type ATP synthase that produces ATP from ADP in the presence of a proton gradient across the membrane. The polypeptide is A-type ATP synthase subunit E (Methanococcus maripaludis (strain DSM 14266 / JCM 13030 / NBRC 101832 / S2 / LL)).